The following is a 407-amino-acid chain: Arginine deiminase (407 aa).

Cys397 (amidino-cysteine intermediate) is an active-site residue.

The protein belongs to the arginine deiminase family.

Its subcellular location is the cytoplasm. It catalyses the reaction L-arginine + H2O = L-citrulline + NH4(+). It participates in amino-acid degradation; L-arginine degradation via ADI pathway; carbamoyl phosphate from L-arginine: step 1/2. This Escherichia coli O6:H1 (strain CFT073 / ATCC 700928 / UPEC) protein is Arginine deiminase (arcA).